Here is a 258-residue protein sequence, read N- to C-terminus: Imidazole glycerol phosphate synthase subunit HisF (258 aa).

Catalysis depends on residues Asp11 and Asp130.

It belongs to the HisA/HisF family. In terms of assembly, heterodimer of HisH and HisF.

Its subcellular location is the cytoplasm. It carries out the reaction 5-[(5-phospho-1-deoxy-D-ribulos-1-ylimino)methylamino]-1-(5-phospho-beta-D-ribosyl)imidazole-4-carboxamide + L-glutamine = D-erythro-1-(imidazol-4-yl)glycerol 3-phosphate + 5-amino-1-(5-phospho-beta-D-ribosyl)imidazole-4-carboxamide + L-glutamate + H(+). The protein operates within amino-acid biosynthesis; L-histidine biosynthesis; L-histidine from 5-phospho-alpha-D-ribose 1-diphosphate: step 5/9. Its function is as follows. IGPS catalyzes the conversion of PRFAR and glutamine to IGP, AICAR and glutamate. The HisF subunit catalyzes the cyclization activity that produces IGP and AICAR from PRFAR using the ammonia provided by the HisH subunit. This is Imidazole glycerol phosphate synthase subunit HisF from Serratia proteamaculans (strain 568).